The following is a 431-amino-acid chain: Putative helicase 055L (431 aa).

Positions 73 to 222 (WGHVTSKGYC…ALGAFFGRED (150 aa)) constitute a Helicase ATP-binding domain. 86-93 (CPPGFGKT) serves as a coordination point for ATP. Positions 175–178 (DEAH) match the DEAH box motif. A disordered region spans residues 403–431 (KCDASRPSQSTPTPTGSSQPAPRTRRPQR). Residues 407 to 424 (SRPSQSTPTPTGSSQPAP) are compositionally biased toward low complexity.

The polypeptide is Putative helicase 055L (Frog virus 3 (isolate Goorha) (FV-3)).